The chain runs to 381 residues: Subtilisin amylosacchariticus (381 aa).

The signal sequence occupies residues 1-29 (MRSKKLWISLLFALTLIFTMAFSNMSAQA). Residues 30–106 (AGKSSTEKKY…VEEDHIAHEY (77 aa)) constitute a propeptide that is removed on maturation. Residues 38–103 (KYIVGFKQTM…VAYVEEDHIA (66 aa)) form the Inhibitor I9 domain. A Ca(2+)-binding site is contributed by Gln-108. One can recognise a Peptidase S8 domain in the interval 111–380 (PYGISQIKAP…KGLINVQAAA (270 aa)). Catalysis depends on Asp-138, which acts as the Charge relay system. Asp-147 is a Ca(2+) binding site. His-170 functions as the Charge relay system in the catalytic mechanism. Positions 181, 183, 185, 187, 275, 277, and 280 each coordinate Ca(2+). Ser-327 functions as the Charge relay system in the catalytic mechanism.

The protein belongs to the peptidase S8 family. The cofactor is Ca(2+).

It localises to the secreted. The enzyme catalyses Hydrolysis of proteins with broad specificity for peptide bonds, and a preference for a large uncharged residue in P1. Hydrolyzes peptide amides.. Subtilisin is an extracellular alkaline serine protease, it catalyzes the hydrolysis of proteins and peptide amides. This is Subtilisin amylosacchariticus (apr) from Bacillus subtilis subsp. amylosacchariticus.